Here is a 93-residue protein sequence, read N- to C-terminus: Neutrophil cationic peptide 2 (93 aa).

The signal sequence occupies residues 1–19 (MRTVPLFAACLLLTLMAQA). Residues 20 to 62 (EPLPRAADHSDTKMKGDREDHVAVISFWEEESTSLQDAGAGAG) constitute a propeptide that is removed on maturation. 3 cysteine pairs are disulfide-bonded: cysteine 65/cysteine 93, cysteine 67/cysteine 82, and cysteine 72/cysteine 92.

This sequence belongs to the alpha-defensin family.

The protein resides in the secreted. Functionally, has antibiotic, anti-fungi and antiviral activity. This Cavia porcellus (Guinea pig) protein is Neutrophil cationic peptide 2.